The primary structure comprises 542 residues: CTP synthase (542 aa).

The tract at residues 1-265 is amidoligase domain; that stretch reads MTRYVFITGG…DREVLGHFGL (265 aa). Ser-13 contributes to the CTP binding site. Ser-13 serves as a coordination point for UTP. Residues 14-19 and Asp-71 each bind ATP; that span reads SLGKGL. Mg(2+) contacts are provided by Asp-71 and Glu-139. CTP is bound by residues 146-148, 186-191, and Lys-222; these read DIE and KTKPTQ. Residues 186–191 and Lys-222 each bind UTP; that span reads KTKPTQ. The Glutamine amidotransferase type-1 domain occupies 291–541; that stretch reads SIAIVGKYTG…VGAAIEQSRL (251 aa). Gly-353 contacts L-glutamine. The active-site Nucleophile; for glutamine hydrolysis is the Cys-380. Residues 381 to 384, Glu-404, and Arg-469 each bind L-glutamine; that span reads FGMQ. Active-site residues include His-514 and Glu-516.

This sequence belongs to the CTP synthase family. Homotetramer.

The catalysed reaction is UTP + L-glutamine + ATP + H2O = CTP + L-glutamate + ADP + phosphate + 2 H(+). It catalyses the reaction L-glutamine + H2O = L-glutamate + NH4(+). The enzyme catalyses UTP + NH4(+) + ATP = CTP + ADP + phosphate + 2 H(+). The protein operates within pyrimidine metabolism; CTP biosynthesis via de novo pathway; CTP from UDP: step 2/2. With respect to regulation, allosterically activated by GTP, when glutamine is the substrate; GTP has no effect on the reaction when ammonia is the substrate. The allosteric effector GTP functions by stabilizing the protein conformation that binds the tetrahedral intermediate(s) formed during glutamine hydrolysis. Inhibited by the product CTP, via allosteric rather than competitive inhibition. Catalyzes the ATP-dependent amination of UTP to CTP with either L-glutamine or ammonia as the source of nitrogen. Regulates intracellular CTP levels through interactions with the four ribonucleotide triphosphates. This is CTP synthase from Methylobacterium radiotolerans (strain ATCC 27329 / DSM 1819 / JCM 2831 / NBRC 15690 / NCIMB 10815 / 0-1).